We begin with the raw amino-acid sequence, 166 residues long: MEMTNAQRLILSNQYYLMSQMDPENSAKYQRLQTIVERGYELQMRELNKEFGCLTEAECREIIDIMEMYHAMQESNKMLADQERAEVDQRRLQFLGFDIASEAQIVHYVRFLVDSEGLYPQFDKADHHFNSQMPMLEKYRRMLTTWRNCPRQYHLCATELSQIFSA.

Belongs to the UPF0304 family.

The polypeptide is UPF0304 protein VS_1049 (Vibrio atlanticus (strain LGP32) (Vibrio splendidus (strain Mel32))).